The chain runs to 400 residues: Large envelope protein (400 aa).

Methionine 1 carries the post-translational modification N-acetylmethionine. The interval 1–20 (MGGWSAKPRKGMGTNLSVPN) is disordered. Glycine 2 is lipidated: N-myristoyl glycine; by host. The segment at 2–119 (GGWSAKPRKG…PPLRDSHPQA (118 aa)) is pre-S1. Positions 2–174 (GGWSAKPRKG…SSRTGDPALN (173 aa)) are pre-S. The Virion surface; in external conformation segment spans residues 2–181 (GGWSAKPRKG…ALNMENITSG (180 aa)). Residues 2–253 (GGWSAKPRKG…PGYRWMCLRR (252 aa)) lie on the Intravirion; in internal conformation side of the membrane. The N-linked (GlcNAc...) asparagine glycan is linked to tryptophan 4. Residues 120–174 (MQWNSTAFQQALQDPRVRGLFFPAGGSSSGTVNPAPNIASHISSISSRTGDPALN) are pre-S2. A helical transmembrane segment spans residues 182-202 (FLGPLLVLQAGFFLLTRILTI). The Intravirion; in external conformation portion of the chain corresponds to 203–253 (PQSLDSWWTSLNFLGGSPVCLGQNSQSPTSNHSPTSCPPICPGYRWMCLRR). Residues 254-274 (FIIFLFILLLCLIFLLVLLDY) form a helical membrane-spanning segment. Residues 275–348 (QGMLPVCPLI…WASVRFSWLS (74 aa)) are Virion surface-facing. Residue asparagine 320 is glycosylated (N-linked (GlcNAc...) asparagine; by host). A helical membrane pass occupies residues 349–369 (LLVPFVQWFVGLSPTVWLSVI). Topologically, residues 370-375 (WMMWYW) are intravirion. The helical transmembrane segment at 376–398 (GPSLYNILSPFIPLLPIFFCLWV) threads the bilayer. Residues 399 to 400 (YI) lie on the Virion surface side of the membrane.

It belongs to the orthohepadnavirus major surface antigen family. In terms of assembly, in its internal form (Li-HBsAg), interacts with the capsid protein and with the isoform S. Interacts with host chaperone CANX. As to quaternary structure, associates with host chaperone CANX through its pre-S2 N glycan; this association may be essential for isoform M proper secretion. Interacts with isoform L. Interacts with the antigens of satellite virus HDV (HDVAgs); this interaction is required for encapsidation of HDV genomic RNA. Post-translationally, isoform M is N-terminally acetylated by host at a ratio of 90%, and N-glycosylated by host at the pre-S2 region. Myristoylated.

Its subcellular location is the virion membrane. Functionally, the large envelope protein exists in two topological conformations, one which is termed 'external' or Le-HBsAg and the other 'internal' or Li-HBsAg. In its external conformation the protein attaches the virus to cell receptors and thereby initiating infection. This interaction determines the species specificity and liver tropism. This attachment induces virion internalization predominantly through caveolin-mediated endocytosis. The large envelope protein also assures fusion between virion membrane and endosomal membrane. In its internal conformation the protein plays a role in virion morphogenesis and mediates the contact with the nucleocapsid like a matrix protein. In terms of biological role, the middle envelope protein plays an important role in the budding of the virion. It is involved in the induction of budding in a nucleocapsid independent way. In this process the majority of envelope proteins bud to form subviral lipoprotein particles of 22 nm of diameter that do not contain a nucleocapsid. The chain is Large envelope protein from Hepatitis B virus genotype A1 subtype adw2 (isolate Southern-Africa/Cai) (HBV-A).